The chain runs to 472 residues: 6-phosphogluconate dehydrogenase, decarboxylating (472 aa).

Residues 10 to 15 (GMAVMG), 33 to 35 (NRT), 74 to 76 (VQA), and Asn102 each bind NADP(+). Substrate-binding positions include Asn102 and 128 to 130 (SGG). Lys184 serves as the catalytic Proton acceptor. 187–188 (HN) is a substrate binding site. Glu191 acts as the Proton donor in catalysis. Tyr192, Lys262, Arg289, Arg447, and His453 together coordinate substrate.

It belongs to the 6-phosphogluconate dehydrogenase family. As to quaternary structure, homodimer.

It catalyses the reaction 6-phospho-D-gluconate + NADP(+) = D-ribulose 5-phosphate + CO2 + NADPH. It functions in the pathway carbohydrate degradation; pentose phosphate pathway; D-ribulose 5-phosphate from D-glucose 6-phosphate (oxidative stage): step 3/3. In terms of biological role, catalyzes the oxidative decarboxylation of 6-phosphogluconate to ribulose 5-phosphate and CO(2), with concomitant reduction of NADP to NADPH. The chain is 6-phosphogluconate dehydrogenase, decarboxylating (gnd) from Lactococcus lactis subsp. lactis (strain IL1403) (Streptococcus lactis).